A 101-amino-acid chain; its full sequence is Small ribosomal subunit protein uS14 (101 aa).

Belongs to the universal ribosomal protein uS14 family. In terms of assembly, part of the 30S ribosomal subunit. Contacts proteins S3 and S10.

Binds 16S rRNA, required for the assembly of 30S particles and may also be responsible for determining the conformation of the 16S rRNA at the A site. The protein is Small ribosomal subunit protein uS14 of Roseobacter denitrificans (strain ATCC 33942 / OCh 114) (Erythrobacter sp. (strain OCh 114)).